A 418-amino-acid polypeptide reads, in one-letter code: Magnesium transporter MRS2-E (418 aa).

The segment at 119 to 146 is disordered; sequence DAAPSTNPAAADRGNGTEQGDQGSVPGL. Positions 166 to 232 form a coiled coil; that stretch reads VCLEHACKDL…RDELEHLLDD (67 aa). Positions 258–268 are enriched in basic and acidic residues; sequence DSHKYASVDHD. The interval 258–287 is disordered; sequence DSHKYASVDHDDDREEEDHDDETESGRESS. Positions 269–280 are enriched in acidic residues; sequence DDREEEDHDDET. The chain crosses the membrane as a helical span at residues 344 to 364; that stretch reads GVMLTTATVVVTAGIVVVSLF. The Required for magnesium transport activity motif lies at 365 to 367; that stretch reads GMN. The chain crosses the membrane as a helical span at residues 389-409; sequence FWETTFGTVAGCIAIYLLAIY.

Belongs to the CorA metal ion transporter (MIT) (TC 1.A.35.5) family.

It localises to the membrane. Magnesium transporter that may mediate the influx of magnesium. The protein is Magnesium transporter MRS2-E (MRS2-E) of Oryza sativa subsp. indica (Rice).